Here is a 265-residue protein sequence, read N- to C-terminus: Undecaprenyl-diphosphatase (265 aa).

7 helical membrane passes run 38 to 58 (SDMF…IIYW), 80 to 100 (LIVA…LGFE), 107 to 127 (PIAW…WAAA), 135 to 155 (ITWL…VFPG), 178 to 198 (TEFA…YELL), 216 to 236 (IAFV…LAYI), and 244 to 264 (FAIY…TGLI).

This sequence belongs to the UppP family.

It localises to the cell inner membrane. It carries out the reaction di-trans,octa-cis-undecaprenyl diphosphate + H2O = di-trans,octa-cis-undecaprenyl phosphate + phosphate + H(+). Its function is as follows. Catalyzes the dephosphorylation of undecaprenyl diphosphate (UPP). Confers resistance to bacitracin. The polypeptide is Undecaprenyl-diphosphatase (Rhizobium johnstonii (strain DSM 114642 / LMG 32736 / 3841) (Rhizobium leguminosarum bv. viciae)).